Consider the following 339-residue polypeptide: Phenylalanine--tRNA ligase alpha subunit (339 aa).

Glu254 is a Mg(2+) binding site.

It belongs to the class-II aminoacyl-tRNA synthetase family. Phe-tRNA synthetase alpha subunit type 1 subfamily. In terms of assembly, tetramer of two alpha and two beta subunits. The cofactor is Mg(2+).

The protein resides in the cytoplasm. It carries out the reaction tRNA(Phe) + L-phenylalanine + ATP = L-phenylalanyl-tRNA(Phe) + AMP + diphosphate + H(+). The sequence is that of Phenylalanine--tRNA ligase alpha subunit from Clostridium botulinum (strain Langeland / NCTC 10281 / Type F).